We begin with the raw amino-acid sequence, 385 residues long: 8-amino-7-oxononanoate synthase (385 aa).

R21 contacts substrate. 108 to 109 (GF) is a pyridoxal 5'-phosphate binding site. Substrate is bound at residue H133. Pyridoxal 5'-phosphate contacts are provided by S179, H207, and T233. The residue at position 236 (K236) is an N6-(pyridoxal phosphate)lysine. T352 is a substrate binding site.

It belongs to the class-II pyridoxal-phosphate-dependent aminotransferase family. BioF subfamily. Homodimer. Pyridoxal 5'-phosphate serves as cofactor.

The enzyme catalyses 6-carboxyhexanoyl-[ACP] + L-alanine + H(+) = (8S)-8-amino-7-oxononanoate + holo-[ACP] + CO2. It participates in cofactor biosynthesis; biotin biosynthesis. Its function is as follows. Catalyzes the decarboxylative condensation of pimeloyl-[acyl-carrier protein] and L-alanine to produce 8-amino-7-oxononanoate (AON), [acyl-carrier protein], and carbon dioxide. The polypeptide is 8-amino-7-oxononanoate synthase (Salmonella agona (strain SL483)).